We begin with the raw amino-acid sequence, 163 residues long: Transcriptional repressor NrdR (163 aa).

A zinc finger lies at 3 to 34 (CPFCAYADTRVVDSRLADDGGSVRRRRECPQC). Residues 49-139 (PVVVKTDGRR…VYRRFEDVDA (91 aa)) form the ATP-cone domain.

It belongs to the NrdR family. The cofactor is Zn(2+).

In terms of biological role, negatively regulates transcription of bacterial ribonucleotide reductase nrd genes and operons by binding to NrdR-boxes. The sequence is that of Transcriptional repressor NrdR from Acidithiobacillus ferrooxidans (strain ATCC 23270 / DSM 14882 / CIP 104768 / NCIMB 8455) (Ferrobacillus ferrooxidans (strain ATCC 23270)).